The following is a 1013-amino-acid chain: Tolloid-like protein 1 (1013 aa).

An N-terminal signal peptide occupies residues Met1–Gly30. The propeptide occupies Leu31–Arg147. One can recognise a Peptidase M12A domain in the interval Ala148–Pro347. The N-linked (GlcNAc...) asparagine glycan is linked to Asn169. 4 cysteine pairs are disulfide-bonded: Cys190-Cys346, Cys210-Cys232, Cys212-Cys213, and Cys349-Cys375. His240 serves as a coordination point for Zn(2+). Glu241 is a catalytic residue. Zn(2+) contacts are provided by His244 and His250. CUB domains are found at residues Cys349 to Ile461 and Cys462 to Glu574. N-linked (GlcNAc...) asparagine glycosylation is found at Asn359 and Asn390. 15 disulfide bridges follow: Cys402–Cys424, Cys462–Cys488, Cys515–Cys537, Cys578–Cys590, Cys586–Cys599, Cys601–Cys614, Cys618–Cys644, Cys671–Cys693, Cys734–Cys745, Cys741–Cys754, Cys756–Cys769, Cys774–Cys800, Cys827–Cys849, Cys887–Cys917, and Cys944–Cys966. The 42-residue stretch at Glu574 to Glu615 folds into the EGF-like 1; calcium-binding domain. A CUB 3 domain is found at Cys618–Asp730. Asn626 is a glycosylation site (N-linked (GlcNAc...) asparagine). The EGF-like 2; calcium-binding domain occupies Asp730–Lys770. 2 CUB domains span residues Cys774 to Glu886 and Cys887 to Ile1003.

It depends on Zn(2+) as a cofactor.

It is found in the secreted. Its function is as follows. Protease which processes procollagen C-propeptides, such as chordin, pro-biglycan and pro-lysyl oxidase. Required for the embryonic development. Predominant protease, which in the development, influences dorsal-ventral patterning and skeletogenesis. This Homo sapiens (Human) protein is Tolloid-like protein 1 (TLL1).